The following is a 106-amino-acid chain: Large ribosomal subunit protein bL21 (106 aa).

It belongs to the bacterial ribosomal protein bL21 family. In terms of assembly, part of the 50S ribosomal subunit. Contacts protein L20.

Functionally, this protein binds to 23S rRNA in the presence of protein L20. This is Large ribosomal subunit protein bL21 from Streptomyces coelicolor (strain ATCC BAA-471 / A3(2) / M145).